The primary structure comprises 247 residues: Probable transcriptional regulatory protein Syncc9605_2132 (247 aa).

The protein belongs to the TACO1 family.

Its subcellular location is the cytoplasm. This chain is Probable transcriptional regulatory protein Syncc9605_2132, found in Synechococcus sp. (strain CC9605).